The primary structure comprises 142 residues: ATP synthase epsilon chain (142 aa).

It belongs to the ATPase epsilon chain family. F-type ATPases have 2 components, CF(1) - the catalytic core - and CF(0) - the membrane proton channel. CF(1) has five subunits: alpha(3), beta(3), gamma(1), delta(1), epsilon(1). CF(0) has three main subunits: a, b and c.

The protein resides in the cell inner membrane. Its function is as follows. Produces ATP from ADP in the presence of a proton gradient across the membrane. This Mannheimia succiniciproducens (strain KCTC 0769BP / MBEL55E) protein is ATP synthase epsilon chain.